A 667-amino-acid polypeptide reads, in one-letter code: MKQKKNRFGSGKRITDQSSVDGDLIAPGNSSMDKRRNSSSSRSSSTQESKELTESLASVHTSDMHQSNIHERIDGDDNPFLDQDDESFKSTRANTSATKLTDVVNPNAEYKDNDSDNDEEILTATAPDTSITEGIVSTEADGGNDVVTASVEDKEGTVTDTAVGLDNANNTVDQKVKESIIPDIKLINDRVQILEANKVSEGQGRAYVAYTIKWGDQSVRRRYSDFESLRSVLMKLFPTSLLPPIPEKQTLKNYSKSIAGSKSNYLLPSEGTGSVDLVLSVINGTVTNNDEKLIRHRIRMLTSFLNKLLQDEEILKTPIIYDFLDPNNINWNDFINSSATFSMLPKSVLQCNPLDPTNTTRIHACLPVPSTSHILPSKEKVSDTKTIERKDGFDIIEQEHKQYESLLKSGFYKHNTQITKSLYGMQHDMKDLSDTFAHFASAQACEAELAEQLTYMSNAYDDAASNLEALVGLLYYNINEPLGESVRMAGSAKELIKYRKLKGVQLEILINSLESKRQQLHKLELQRGVQPRNGNTASGASGNDESSVKKPQASKSQSSSYGGKFLNRFNKIAAMVKETINYQEQDPQTTMANLIKEIEQLNESEQVARHDLEDISKIIKEDRLTKFSEEREKELNEILRNYSKYLKDYAKKNLELWKEIKTRQEQL.

Positions 1-94 (MKQKKNRFGS…DESFKSTRAN (94 aa)) are disordered. The segment covering 38 to 47 (SSSSRSSSTQ) has biased composition (low complexity). Over residues 55–67 (SLASVHTSDMHQS) the composition is skewed to polar residues. Positions 76–85 (DDNPFLDQDD) are enriched in acidic residues. In terms of domain architecture, PX spans 185-331 (KLINDRVQIL…DFLDPNNINW (147 aa)). A 1,2-diacyl-sn-glycero-3-phospho-(1D-myo-inositol-3-phosphate)-binding residues include Arg222, Ser224, Lys248, and Arg297. The disordered stretch occupies residues 524 to 562 (ELQRGVQPRNGNTASGASGNDESSVKKPQASKSQSSSYG). Positions 532–545 (RNGNTASGASGNDE) are enriched in polar residues. The span at 549–560 (KKPQASKSQSSS) shows a compositional bias: low complexity. Residues 588–652 (QTTMANLIKE…SKYLKDYAKK (65 aa)) are a coiled coil.

Belongs to the sorting nexin family.

Its subcellular location is the endosome membrane. The protein resides in the preautophagosomal structure membrane. Functionally, required for cytoplasm to vacuole transport (Cvt), pexophagy and mitophagy. Also involved in endoplasmic reticulum-specific autophagic process and is essential for the survival of cells subjected to severe ER stress. Functions in protein retrieval from the endocytic pathway. The protein is Autophagy-related protein 20 (ATG20) of Vanderwaltozyma polyspora (strain ATCC 22028 / DSM 70294 / BCRC 21397 / CBS 2163 / NBRC 10782 / NRRL Y-8283 / UCD 57-17) (Kluyveromyces polysporus).